The sequence spans 118 residues: MAGNQRQGVAFIRVNGMELESMEGASFTPSGITREEVTGSRVYGWKGKPRAAKVECKIPGGGPIGLDEIIDWENITVEFQADTGETWMLANAWQADEPKNDGGEISLVLMAKQSKRIA.

In terms of assembly, homomultimer.

The protein localises to the virion. The protein resides in the host cytoplasm. In terms of biological role, polymerizes to make up the central tail tube that is surrounded by the tail sheath protein (TSP). Tail tube protein polymerization takes place around the tape measure protein (TMP) and is probably directed by chaperone proteins. Upon binding to host cell, the tail sheath contracts and the tail tube penetrates the host envelope. The tail tube is involved in viral genome delivery during ejection. This chain is Tail tube protein (M), found in Enterobacteriaceae (Bacteriophage Mu).